The sequence spans 326 residues: Trans-L-3-hydroxyproline dehydratase (326 aa).

Residue Cys80 is the Proton acceptor of the active site. Residues 81–82 (GH), Asp241, and 246–247 (GS) contribute to the substrate site.

Belongs to the proline racemase family. As to quaternary structure, homodimer.

It carries out the reaction trans-3-hydroxy-L-proline = 1-pyrroline-2-carboxylate + H2O. In terms of biological role, catalyzes the dehydration of trans-3-hydroxy-L-proline to delta-1-pyrroline-2-carboxylate (Pyr2C). The protein is Trans-L-3-hydroxyproline dehydratase (l3hypdh) of Saccoglossus kowalevskii (Acorn worm).